The following is a 1083-amino-acid chain: UPF0182 protein BAD_0641 (1083 aa).

Positions 1–72 (MSFFDMFGPM…TSKPNRPRKP (72 aa)) are disordered. The next 7 helical transmembrane spans lie at 78-98 (IFIG…ALAQ), 125-145 (LWLA…TLAI), 178-198 (IAVV…NANW), 239-259 (SLLL…MGGI), 281-301 (IGIW…LGVF), 325-345 (VTFI…LWIM), and 372-392 (VAIA…PVLL). The segment at 976–1061 (DSGASAGDAE…SDAAMKKGDW (86 aa)) is disordered. Composition is skewed to basic and acidic residues over residues 991–1013 (TDDK…DGKQ) and 1050–1060 (KDSDAAMKKGD).

The protein belongs to the UPF0182 family.

The protein localises to the cell membrane. The protein is UPF0182 protein BAD_0641 of Bifidobacterium adolescentis (strain ATCC 15703 / DSM 20083 / NCTC 11814 / E194a).